The sequence spans 129 residues: 8-oxo-dGTP diphosphatase (129 aa).

The Nudix hydrolase domain occupies 1-129 (MKKLQIAVGI…EPVIAKLKRL (129 aa)). 8-oxo-dGTP-binding positions include R23, H28, and 34 to 37 (EFPG). Residues G37 and E57 each coordinate Mg(2+). Residues 38–59 (GKIEMGETPEQAVVRELQEEVG) carry the Nudix box motif. N119 contacts 8-oxo-dGTP.

It belongs to the Nudix hydrolase family. Monomer. Mg(2+) serves as cofactor.

The catalysed reaction is 8-oxo-dGTP + H2O = 8-oxo-dGMP + diphosphate + H(+). The enzyme catalyses 8-oxo-GTP + H2O = 8-oxo-GMP + diphosphate + H(+). It catalyses the reaction 8-oxo-dGDP + H2O = 8-oxo-dGMP + phosphate + H(+). It carries out the reaction 8-oxo-GDP + H2O = 8-oxo-GMP + phosphate + H(+). In terms of biological role, specifically hydrolyzes both 8-oxo-deoxyguanosine triphosphate (8-oxo-dGTP) and 8-oxo-guanosine triphosphate (8-oxo-GTP) to the related monophosphates, thereby cleaning up the nucleotide pools and preventing misincorporation of 8-oxoGua into DNA and RNA. It prevents replicational errors by removing an oxidatively damaged form of guanine (8-oxo-dGTP) from DNA and the nucleotide pool. 8-oxo-dGTP can be inserted opposite dA and dC residues of template DNA with almost equal efficiency thus leading to A.T to G.C transversions. MutT may also ensure transcriptional fidelity, removing 8-oxo-GTP from the ribonucleotide triphosphate pool. However, due to the lower efficiency of RNA polymerase 8-oxo-GTP incorporation, MutT is probably not a major contributor to transcriptional fidelity. It also hydrolyzes 8-oxo-dGDP and 8-oxo-GDP to their monophosphate form. In vitro, can also use dGTP, dGDP and other various nucleoside di- and triphosphates, with much lower efficiency. Works cooperatively with MutM and MutY to prevent accumulation in the DNA of oxidized guanine residues. This chain is 8-oxo-dGTP diphosphatase, found in Escherichia coli (strain K12).